Consider the following 123-residue polypeptide: WAP four-disulfide core domain protein 5 (123 aa).

The signal sequence occupies residues 1–24 (MRIQSLLLLGALLAVGSQPPAAFG). WAP domains are found at residues 27–73 (KGEK…CVPR) and 74–121 (VSVK…RDPA). 8 disulfide bridges follow: cysteine 34/cysteine 62, cysteine 41/cysteine 66, cysteine 49/cysteine 61, cysteine 55/cysteine 70, cysteine 81/cysteine 109, cysteine 88/cysteine 113, cysteine 96/cysteine 108, and cysteine 102/cysteine 117.

It is found in the secreted. Its function is as follows. Putative acid-stable proteinase inhibitor. The protein is WAP four-disulfide core domain protein 5 (WFDC5) of Saimiri boliviensis boliviensis (Bolivian squirrel monkey).